A 340-amino-acid chain; its full sequence is Aliphatic sulfonates import ATP-binding protein SsuB 1 (340 aa).

The interval 44 to 72 (THHHARVAAQGHARGDAQPPAGALARDDG) is disordered. The 220-residue stretch at 80 to 299 (VQLRGVGKRY…ARASAGFAAL (220 aa)) folds into the ABC transporter domain. ATP is bound at residue 112-119 (GRSGCGKS).

It belongs to the ABC transporter superfamily. Aliphatic sulfonates importer (TC 3.A.1.17.2) family. In terms of assembly, the complex is composed of two ATP-binding proteins (SsuB), two transmembrane proteins (SsuC) and a solute-binding protein (SsuA).

It is found in the cell inner membrane. The catalysed reaction is ATP + H2O + aliphatic sulfonate-[sulfonate-binding protein]Side 1 = ADP + phosphate + aliphatic sulfonateSide 2 + [sulfonate-binding protein]Side 1.. In terms of biological role, part of the ABC transporter complex SsuABC involved in aliphatic sulfonates import. Responsible for energy coupling to the transport system. In Paraburkholderia xenovorans (strain LB400), this protein is Aliphatic sulfonates import ATP-binding protein SsuB 1.